The chain runs to 487 residues: Glucose starvation modulator protein 1 (487 aa).

The disordered stretch occupies residues 1–75; sequence MSIRFPEIPG…KRLTPQEKKA (75 aa). Over residues 59–68 the composition is skewed to polar residues; sequence SFSSSMTKRL. The segment at residues 83-111 is a DNA-binding region (zn(2)-C6 fungal-type); sequence CVFCHSKHLQCSHSRPCQNCIKRNLAHEC. Positions 122–139 are enriched in polar residues; the sequence is MSTTEVPAVSGESSSESG. Positions 122 to 158 are disordered; sequence MSTTEVPAVSGESSSESGRATGENGSEMGNPPDPQIA. In terms of domain architecture, PAS spans 348–420; it reads CLLDYENLSR…FRLFESVAVG (73 aa).

This sequence belongs to the ERT1/acuK family.

The protein resides in the nucleus. Its function is as follows. Transcription factor which regulates nonfermentable carbon utilization. The protein is Glucose starvation modulator protein 1 (GSM1) of Clavispora lusitaniae (strain ATCC 42720) (Yeast).